A 1410-amino-acid chain; its full sequence is DNA-directed RNA polymerase subunit beta' (1410 aa).

Residues Cys70, Cys72, Cys85, and Cys88 each coordinate Zn(2+). Mg(2+)-binding residues include Asp460, Asp462, and Asp464. 4 residues coordinate Zn(2+): Cys814, Cys888, Cys895, and Cys898.

This sequence belongs to the RNA polymerase beta' chain family. The RNAP catalytic core consists of 2 alpha, 1 beta, 1 beta' and 1 omega subunit. When a sigma factor is associated with the core the holoenzyme is formed, which can initiate transcription. It depends on Mg(2+) as a cofactor. Zn(2+) serves as cofactor.

It catalyses the reaction RNA(n) + a ribonucleoside 5'-triphosphate = RNA(n+1) + diphosphate. Functionally, DNA-dependent RNA polymerase catalyzes the transcription of DNA into RNA using the four ribonucleoside triphosphates as substrates. The chain is DNA-directed RNA polymerase subunit beta' from Saccharophagus degradans (strain 2-40 / ATCC 43961 / DSM 17024).